Reading from the N-terminus, the 484-residue chain is Glutamyl-tRNA(Gln) amidotransferase subunit A (484 aa).

Catalysis depends on charge relay system residues Lys-76 and Ser-151. Catalysis depends on Ser-175, which acts as the Acyl-ester intermediate.

Belongs to the amidase family. GatA subfamily. In terms of assembly, heterotrimer of A, B and C subunits.

The catalysed reaction is L-glutamyl-tRNA(Gln) + L-glutamine + ATP + H2O = L-glutaminyl-tRNA(Gln) + L-glutamate + ADP + phosphate + H(+). In terms of biological role, allows the formation of correctly charged Gln-tRNA(Gln) through the transamidation of misacylated Glu-tRNA(Gln) in organisms which lack glutaminyl-tRNA synthetase. The reaction takes place in the presence of glutamine and ATP through an activated gamma-phospho-Glu-tRNA(Gln). The sequence is that of Glutamyl-tRNA(Gln) amidotransferase subunit A from Cellvibrio japonicus (strain Ueda107) (Pseudomonas fluorescens subsp. cellulosa).